Consider the following 1144-residue polypeptide: Alpha-mannosidase 2 (1144 aa).

Over M1–R5 the chain is Cytoplasmic. Residues Q6–L26 traverse the membrane as a helical; Signal-anchor for type II membrane protein segment. Residues D27–R1144 are Lumenal-facing. The N-linked (GlcNAc...) asparagine glycan is linked to N78. S80 and S82 each carry phosphoserine. The N-linked (GlcNAc...) asparagine glycan is linked to N93. Positions 175, 177, 289, and 569 each coordinate Zn(2+). D289 functions as the Nucleophile in the catalytic mechanism. N1125 carries an N-linked (GlcNAc...) asparagine glycan.

The protein belongs to the glycosyl hydrolase 38 family. As to quaternary structure, homodimer; disulfide-linked. Zn(2+) is required as a cofactor. Glycosylated.

It localises to the golgi apparatus membrane. It catalyses the reaction N(4)-{beta-D-GlcNAc-(1-&gt;2)-alpha-D-Man-(1-&gt;3)-[alpha-D-Man-(1-&gt;3)-[alpha-D-Man-(1-&gt;6)]-alpha-D-Man-(1-&gt;6)]-beta-D-Man-(1-&gt;4)-beta-D-GlcNAc-(1-&gt;4)-beta-D-GlcNAc}-L-asparaginyl-[protein] + 2 H2O = 2 alpha-D-mannopyranose + an N(4)-{beta-D-GlcNAc-(1-&gt;2)-alpha-D-Man-(1-&gt;3)-[alpha-D-Man-(1-&gt;6)]-beta-D-Man-(1-&gt;4)-beta-D-GlcNAc-(1-&gt;4)-beta-D-GlcNAc}-L-asparaginyl-[protein]. It participates in protein modification; protein glycosylation. Functionally, catalyzes the first committed step in the biosynthesis of complex N-glycans. It controls conversion of high mannose to complex N-glycans; the final hydrolytic step in the N-glycan maturation pathway. The polypeptide is Alpha-mannosidase 2 (MAN2A1) (Homo sapiens (Human)).